A 406-amino-acid polypeptide reads, in one-letter code: Putative competence-damage inducible protein (406 aa).

This sequence belongs to the CinA family.

This chain is Putative competence-damage inducible protein, found in Natranaerobius thermophilus (strain ATCC BAA-1301 / DSM 18059 / JW/NM-WN-LF).